The chain runs to 520 residues: 2-isopropylmalate synthase (520 aa).

The region spanning 5-268 is the Pyruvate carboxyltransferase domain; that stretch reads VYIFDTTLRD…YTDVNTKEIY (264 aa). Mn(2+) contacts are provided by Asp14, His202, His204, and Asn238. The tract at residues 394-520 is regulatory domain; that stretch reads KVLHFQVQSG…RQEIREEGTV (127 aa).

Belongs to the alpha-IPM synthase/homocitrate synthase family. LeuA type 1 subfamily. Homodimer. Mn(2+) serves as cofactor.

The protein localises to the cytoplasm. It catalyses the reaction 3-methyl-2-oxobutanoate + acetyl-CoA + H2O = (2S)-2-isopropylmalate + CoA + H(+). The protein operates within amino-acid biosynthesis; L-leucine biosynthesis; L-leucine from 3-methyl-2-oxobutanoate: step 1/4. In terms of biological role, catalyzes the condensation of the acetyl group of acetyl-CoA with 3-methyl-2-oxobutanoate (2-ketoisovalerate) to form 3-carboxy-3-hydroxy-4-methylpentanoate (2-isopropylmalate). The chain is 2-isopropylmalate synthase from Aquifex aeolicus (strain VF5).